We begin with the raw amino-acid sequence, 299 residues long: Bifunctional protein FolD 2 (299 aa).

Belongs to the tetrahydrofolate dehydrogenase/cyclohydrolase family. In terms of assembly, homodimer.

It carries out the reaction (6R)-5,10-methylene-5,6,7,8-tetrahydrofolate + NADP(+) = (6R)-5,10-methenyltetrahydrofolate + NADPH. The catalysed reaction is (6R)-5,10-methenyltetrahydrofolate + H2O = (6R)-10-formyltetrahydrofolate + H(+). Its pathway is one-carbon metabolism; tetrahydrofolate interconversion. Catalyzes the oxidation of 5,10-methylenetetrahydrofolate to 5,10-methenyltetrahydrofolate and then the hydrolysis of 5,10-methenyltetrahydrofolate to 10-formyltetrahydrofolate. The chain is Bifunctional protein FolD 2 (FOLD2) from Arabidopsis thaliana (Mouse-ear cress).